Consider the following 246-residue polypeptide: MYTRYSYSPTLGKTYVYDNKYFKNLGAVIKNAKRKKHLEEHEHEERNLDSLDKYLVAEDPFLGPGKNQKLTLFKEIRSVKPDTMKLVVNWSGREFLRETWTRFMEDSFPIVNDQEIMDVFLSVNMRPTKPNRCYRFLAQHALRCDPDYIPHEVIRIVEPSYVGSNNEYRISLAKKYGGCPVMNLHAEYTNSFEDFITNVIWENFYKPIVYVGTDSAEEEEILLEVSLIFKIKEFAPDAPLYTGPAY.

The protein belongs to the polyhedrin family.

Its function is as follows. Major component of the virus occlusion bodies, which are large proteinaceous structures (polyhedra), that protect the virus from the outside environment for extended periods until they are ingested by insect larvae. This is Polyhedrin (PH) from Heliothis zea nuclear polyhedrosis virus (HzSNPV).